The primary structure comprises 368 residues: Quinolinate synthase (368 aa).

Positions 46 and 63 each coordinate iminosuccinate. Cys110 is a binding site for [4Fe-4S] cluster. Iminosuccinate-binding positions include Tyr141–Asn143 and Ser162. Cys230 contributes to the [4Fe-4S] cluster binding site. Iminosuccinate is bound by residues His256 to Glu258 and Thr273. Cys320 is a [4Fe-4S] cluster binding site.

Belongs to the quinolinate synthase family. Type 3 subfamily. [4Fe-4S] cluster serves as cofactor.

It localises to the cytoplasm. The enzyme catalyses iminosuccinate + dihydroxyacetone phosphate = quinolinate + phosphate + 2 H2O + H(+). It participates in cofactor biosynthesis; NAD(+) biosynthesis; quinolinate from iminoaspartate: step 1/1. In terms of biological role, catalyzes the condensation of iminoaspartate with dihydroxyacetone phosphate to form quinolinate. The polypeptide is Quinolinate synthase (Bacillus cereus (strain Q1)).